The primary structure comprises 262 residues: Adenosylcobinamide-GDP ribazoletransferase (262 aa).

6 helical membrane passes run 43 to 63 (YFGL…WLTQ), 66 to 86 (LPAG…TGGF), 120 to 140 (GALA…ELAL), 146 to 166 (AGSA…SLIF), 191 to 211 (LFIL…IAAL), and 242 to 262 (AAQQ…GGIL).

Belongs to the CobS family. The cofactor is Mg(2+).

Its subcellular location is the cell inner membrane. The catalysed reaction is alpha-ribazole + adenosylcob(III)inamide-GDP = adenosylcob(III)alamin + GMP + H(+). The enzyme catalyses alpha-ribazole 5'-phosphate + adenosylcob(III)inamide-GDP = adenosylcob(III)alamin 5'-phosphate + GMP + H(+). The protein operates within cofactor biosynthesis; adenosylcobalamin biosynthesis; adenosylcobalamin from cob(II)yrinate a,c-diamide: step 7/7. Its function is as follows. Joins adenosylcobinamide-GDP and alpha-ribazole to generate adenosylcobalamin (Ado-cobalamin). Also synthesizes adenosylcobalamin 5'-phosphate from adenosylcobinamide-GDP and alpha-ribazole 5'-phosphate. The protein is Adenosylcobinamide-GDP ribazoletransferase of Shewanella oneidensis (strain ATCC 700550 / JCM 31522 / CIP 106686 / LMG 19005 / NCIMB 14063 / MR-1).